Reading from the N-terminus, the 178-residue chain is Large ribosomal subunit protein uL6 (178 aa).

It belongs to the universal ribosomal protein uL6 family. Part of the 50S ribosomal subunit.

This protein binds to the 23S rRNA, and is important in its secondary structure. It is located near the subunit interface in the base of the L7/L12 stalk, and near the tRNA binding site of the peptidyltransferase center. The protein is Large ribosomal subunit protein uL6 of Exiguobacterium sibiricum (strain DSM 17290 / CCUG 55495 / CIP 109462 / JCM 13490 / 255-15).